The following is a 953-amino-acid chain: Coatomer subunit beta (953 aa).

Threonine 2 bears the N-acetylthreonine mark. HEAT repeat units follow at residues 96–131 (HEMILVCDAYRKDLQHPNEFIRGSTLRFLCKLKEAE), 132–168 (LLEPLMPAIRACLEHRHSYVRRNAVLAIYTIYRNFEH), 240–276 (SERARFIRCIYNLLQSSSPAVKYEAAGTLVTLSSAPT), 277–314 (AIKAAAQCYIDLIIKESDNNVKLIVLDRLVELKEHPAH), 316–353 (RVLQDLVMDILRVLSTPDLEVRKKTLQLALDLVSSRNV), and 396–433 (DMAANVIPVLMEFLSDSNEAAAADVLEFVREAIQRFDN). Residue lysine 494 is modified to N6-acetyllysine.

Oligomeric complex that consists of at least the alpha, beta, beta', gamma, delta, epsilon and zeta subunits. Interacts with CAPN8. Interacts with SCYL1 and PRKCE. Interacts with COPG1. Interacts with ARF1 (myristoylated); this interaction is required for binding of COPB1 to Golgi membranes. Interacts (via trunk domain) with ARF1 (via switch I region); the interaction is direct. Interacts with KCNK2 (via N-terminus); this interaction increases the channel-mediated whole cell currents and promotes plasma membrane expression of KCNK2. Interacts with STX17. Interacts with TMEM115. Interacts with TMEM41B. In terms of processing, proteolytically cleaved between Ser-528 and Ser-529 by CAPN8. As to expression, predominantly expressed in the upper one-third of the oxyntic mucosa and in most regions of the pyloric mucosa. Ubiquitously expressed including platelet, liver, heart, spleen, lung and kidney.

It is found in the cytoplasm. It localises to the golgi apparatus membrane. The protein resides in the cytoplasmic vesicle. Its subcellular location is the COPI-coated vesicle membrane. The protein localises to the cell membrane. It is found in the endoplasmic reticulum-Golgi intermediate compartment. Functionally, the coatomer is a cytosolic protein complex that binds to dilysine motifs and reversibly associates with Golgi non-clathrin-coated vesicles, which further mediate biosynthetic protein transport from the ER, via the Golgi up to the trans Golgi network. Coatomer complex is required for budding from Golgi membranes, and is essential for the retrograde Golgi-to-ER transport of dilysine-tagged proteins. In mammals, the coatomer can only be recruited by membranes associated to ADP-ribosylation factors (ARFs), which are small GTP-binding proteins; the complex also influences the Golgi structural integrity, as well as the processing, activity, and endocytic recycling of LDL receptors. Involved in the Golgi disassembly and reassembly processes during cell cycle. Involved in autophagy by playing a role in early endosome function. Plays a role in organellar compartmentalization of secretory compartments including endoplasmic reticulum (ER)-Golgi intermediate compartment (ERGIC), Golgi, trans-Golgi network (TGN) and recycling endosomes, and in biosynthetic transport of CAV1. Plays a functional role in facilitating the transport of kappa-type opioid receptor mRNAs into axons and enhances translation of these proteins in cortical neurons. Required for limiting lipid storage in lipid droplets. Involved in lipid homeostasis by regulating the presence of perilipin family members PLIN2 and PLIN3 at the lipid droplet surface and promoting the association of adipocyte triglyceride lipase (PNPLA2) with the lipid droplet surface to mediate lipolysis. The sequence is that of Coatomer subunit beta (Copb1) from Mus musculus (Mouse).